We begin with the raw amino-acid sequence, 112 residues long: Nitrogenase-stabilizing/protective protein NifW (112 aa).

It belongs to the NifW family. As to quaternary structure, homotrimer; associates with NifD.

Functionally, may protect the nitrogenase Fe-Mo protein from oxidative damage. The chain is Nitrogenase-stabilizing/protective protein NifW from Rhodopseudomonas palustris (strain BisA53).